A 121-amino-acid chain; its full sequence is Small ribosomal subunit protein bS6 (121 aa).

This sequence belongs to the bacterial ribosomal protein bS6 family.

In terms of biological role, binds together with bS18 to 16S ribosomal RNA. The polypeptide is Small ribosomal subunit protein bS6 (Rickettsia felis (strain ATCC VR-1525 / URRWXCal2) (Rickettsia azadi)).